A 325-amino-acid chain; its full sequence is MEGLGIVFLAAVVLLFVFLFFSFIPVGLWISAWAAGVRVPLLTLVAMRLRRVPPAKIIYPLIKATKAGLDVRLDRLEAHYLAGGNVDRVVDALIAADKAGIKLTFDRAAAIDLAGRDVLEAVRVSVNPKVIQTPMVAAVAKDGIQLLATARVTVRANIDRLVGGAGEETIIARVGEGIVTTIGSANSHKEVLENPDRISKTVLEKGLDAGTAFEILSVDIADVDVGKNIGAQLQIDQAEADKKIAQAKAEERRAMAVAAEQENRALVEAMRAKLVEAQAQVPLALAEALRKGHLGVMDYYRLKNIEADTDMRESISRAAKPEGEE.

Transmembrane regions (helical) follow at residues 4-24 (LGIV…FSFI) and 26-46 (VGLW…TLVA).

The protein belongs to the flotillin-like FloA family. As to quaternary structure, homooligomerizes.

It localises to the cell membrane. Its subcellular location is the membrane raft. In terms of biological role, found in functional membrane microdomains (FMM) that may be equivalent to eukaryotic membrane rafts. FMMs are highly dynamic and increase in number as cells age. Flotillins are thought to be important factors in membrane fluidity. The polypeptide is Flotillin-like protein FloA (Thermus thermophilus (strain ATCC BAA-163 / DSM 7039 / HB27)).